We begin with the raw amino-acid sequence, 90 residues long: Probable Fe(2+)-trafficking protein (90 aa).

It belongs to the Fe(2+)-trafficking protein family.

Could be a mediator in iron transactions between iron acquisition and iron-requiring processes, such as synthesis and/or repair of Fe-S clusters in biosynthetic enzymes. In Acidovorax ebreus (strain TPSY) (Diaphorobacter sp. (strain TPSY)), this protein is Probable Fe(2+)-trafficking protein.